Consider the following 619-residue polypeptide: Grainyhead-like protein 2 homolog (619 aa).

Positions methionine 1–aspartate 90 are transcription activation. 3 disordered regions span residues histidine 86 to glutamate 108, asparagine 125 to alanine 147, and glutamate 423 to serine 444. Residues glutamate 99–glutamate 108 are compositionally biased toward polar residues. Positions alanine 239–isoleucine 477 constitute a Grh/CP2 DB domain.

It belongs to the grh/CP2 family. Grainyhead subfamily.

The protein resides in the nucleus. It localises to the membrane. In terms of biological role, transcription factor playing an important role in primary neurulation and in epithelial development. Binds directly to the consensus DNA sequence 5'-AACCGGTT-3' acting as an activator and repressor on distinct target genes. The polypeptide is Grainyhead-like protein 2 homolog (grhl2) (Xenopus tropicalis (Western clawed frog)).